A 92-amino-acid polypeptide reads, in one-letter code: Small ribosomal subunit protein uS19 (92 aa).

The protein belongs to the universal ribosomal protein uS19 family.

Functionally, protein S19 forms a complex with S13 that binds strongly to the 16S ribosomal RNA. In Nostoc sp. (strain PCC 7120 / SAG 25.82 / UTEX 2576), this protein is Small ribosomal subunit protein uS19.